The chain runs to 37 residues: Large ribosomal subunit protein bL36 (37 aa).

This sequence belongs to the bacterial ribosomal protein bL36 family.

This Staphylococcus saprophyticus subsp. saprophyticus (strain ATCC 15305 / DSM 20229 / NCIMB 8711 / NCTC 7292 / S-41) protein is Large ribosomal subunit protein bL36.